An 89-amino-acid chain; its full sequence is Small ribosomal subunit protein uS14A (89 aa).

The protein belongs to the universal ribosomal protein uS14 family. In terms of assembly, part of the 30S ribosomal subunit. Contacts proteins S3 and S10.

Functionally, binds 16S rRNA, required for the assembly of 30S particles and may also be responsible for determining the conformation of the 16S rRNA at the A site. The protein is Small ribosomal subunit protein uS14A of Staphylococcus haemolyticus (strain JCSC1435).